Here is a 326-residue protein sequence, read N- to C-terminus: Transposase InsH for insertion sequence element IS5Y (326 aa).

This sequence belongs to the transposase 11 family.

Functionally, involved in the transposition of the insertion sequence IS5. The protein is Transposase InsH for insertion sequence element IS5Y (insH5) of Escherichia coli (strain K12).